The primary structure comprises 433 residues: Histidinol dehydrogenase (433 aa).

Substrate is bound by residues Ser-236, Gln-258, and His-261. Zn(2+) contacts are provided by Gln-258 and His-261. Catalysis depends on proton acceptor residues Glu-325 and His-326. His-326, Asp-359, Glu-413, and His-418 together coordinate substrate. Asp-359 is a binding site for Zn(2+). His-418 lines the Zn(2+) pocket.

It belongs to the histidinol dehydrogenase family. It depends on Zn(2+) as a cofactor.

It catalyses the reaction L-histidinol + 2 NAD(+) + H2O = L-histidine + 2 NADH + 3 H(+). It participates in amino-acid biosynthesis; L-histidine biosynthesis; L-histidine from 5-phospho-alpha-D-ribose 1-diphosphate: step 9/9. Its function is as follows. Catalyzes the sequential NAD-dependent oxidations of L-histidinol to L-histidinaldehyde and then to L-histidine. This chain is Histidinol dehydrogenase, found in Pseudoalteromonas translucida (strain TAC 125).